A 259-amino-acid chain; its full sequence is 4-hydroxy-tetrahydrodipicolinate reductase (259 aa).

NAD(+)-binding positions include 9–14 (GAGGRM) and Glu-35. NADP(+) is bound at residue Arg-36. NAD(+) contacts are provided by residues 92 to 94 (GTT) and 116 to 119 (APNM). His-149 (proton donor/acceptor) is an active-site residue. His-150 contributes to the (S)-2,3,4,5-tetrahydrodipicolinate binding site. Catalysis depends on Lys-153, which acts as the Proton donor. 159–160 (GT) contacts (S)-2,3,4,5-tetrahydrodipicolinate.

Belongs to the DapB family.

Its subcellular location is the cytoplasm. The enzyme catalyses (S)-2,3,4,5-tetrahydrodipicolinate + NAD(+) + H2O = (2S,4S)-4-hydroxy-2,3,4,5-tetrahydrodipicolinate + NADH + H(+). It carries out the reaction (S)-2,3,4,5-tetrahydrodipicolinate + NADP(+) + H2O = (2S,4S)-4-hydroxy-2,3,4,5-tetrahydrodipicolinate + NADPH + H(+). It functions in the pathway amino-acid biosynthesis; L-lysine biosynthesis via DAP pathway; (S)-tetrahydrodipicolinate from L-aspartate: step 4/4. Its function is as follows. Catalyzes the conversion of 4-hydroxy-tetrahydrodipicolinate (HTPA) to tetrahydrodipicolinate. The polypeptide is 4-hydroxy-tetrahydrodipicolinate reductase (Oleidesulfovibrio alaskensis (strain ATCC BAA-1058 / DSM 17464 / G20) (Desulfovibrio alaskensis)).